A 130-amino-acid chain; its full sequence is Protein ApaG (130 aa).

The 125-residue stretch at 3–127 (SAVTQDIQIT…FSLDSPFVRR (125 aa)) folds into the ApaG domain.

This is Protein ApaG from Methylocella silvestris (strain DSM 15510 / CIP 108128 / LMG 27833 / NCIMB 13906 / BL2).